We begin with the raw amino-acid sequence, 306 residues long: MALIGKSERFSADFVMGGAAAIVAKSAAAPIERVKLLLQNQGEMIKTGHLIRPYTGLGNCFTRIYREEGVLSFWRGNQANVIRYFPTQASNFAFKGYFKNLLGCSKEKDGYLKWFAGNVASGSAAGATTSLFLYHLDYARTRLGTDAKECSVNGKRQFKGMIDVYRKTLSSDGIKGLYRGFGVSIVGITLYRGMYFGMYDTIKPIVLVGSLEGNFLASFLLGWSITTSAGVIAYPFDTLRRRMMLTSGQPVKYRNTIHALREILKSEGFYALYRGVTANMLLGVAGAGVLAGYDQLHQIAYKHWVQ.

Solcar repeat units lie at residues 8–101, 113–205, and 213–299; these read ERFS…FKNL, KWFA…IKPI, and GNFL…LHQI. A run of 5 helical transmembrane segments spans residues 10 to 37, 78 to 102, 111 to 131, 181 to 202, and 216 to 236; these read FSADFVMGGAAAIVAKSAAAPIERVKLL, QANVIRYFPTQASNFAFKGYFKNLL, YLKWFAGNVASGSAAGATTSL, FGVSIVGITLYRGMYFGMYDTI, and LASFLLGWSITTSAGVIAYPF. Positions 83 and 95 each coordinate ADP. Position 240 (R240) interacts with ADP. Residues 240–245 form an important for transport activity region; sequence RRRMML. The Nucleotide carrier signature motif signature appears at 240–245; sequence RRRMML. The chain crosses the membrane as a helical span at residues 276-296; that stretch reads VTANMLLGVAGAGVLAGYDQL.

Belongs to the mitochondrial carrier (TC 2.A.29) family.

It localises to the endoplasmic reticulum membrane. It catalyses the reaction ADP(in) + ATP(out) = ADP(out) + ATP(in). In terms of biological role, ADP:ATP antiporter that catalyzes the exchange of ADP and ATP across the endoplasmic reticulum membrane. The polypeptide is ADP,ATP carrier protein ER-ANT1 (ER-ANT1) (Arabidopsis thaliana (Mouse-ear cress)).